Consider the following 108-residue polypeptide: Nucleoid-associated protein BARBAKC583_1239 (108 aa).

The protein belongs to the YbaB/EbfC family. In terms of assembly, homodimer.

It is found in the cytoplasm. The protein localises to the nucleoid. In terms of biological role, binds to DNA and alters its conformation. May be involved in regulation of gene expression, nucleoid organization and DNA protection. The chain is Nucleoid-associated protein BARBAKC583_1239 from Bartonella bacilliformis (strain ATCC 35685 / KC583 / Herrer 020/F12,63).